The primary structure comprises 592 residues: Cryptochrome-2 (592 aa).

In terms of domain architecture, Photolyase/cryptochrome alpha/beta spans 21 to 150 (ASSVHWFRKG…EVVTENSHTL (130 aa)). Lys29 is covalently cross-linked (Glycyl lysine isopeptide (Lys-Gly) (interchain with G-Cter in ubiquitin)). Ser89 is subject to Phosphoserine. Residues Lys125 and Lys241 each participate in a glycyl lysine isopeptide (Lys-Gly) (interchain with G-Cter in ubiquitin) cross-link. Phosphoserine; by MAPK is present on Ser265. Ser270 lines the FAD pocket. Ser298 carries the phosphoserine modification. FAD is bound at residue Gln307. Lys347 is covalently cross-linked (Glycyl lysine isopeptide (Lys-Gly) (interchain with G-Cter in ubiquitin)). Residues His373 and 405-407 (DAD) contribute to the FAD site. The segment at 389–488 (WVSWESGVRV…IIGVDYPRPI (100 aa)) is required for inhibition of CLOCK-BMAL1-mediated transcription. Residues Lys474 and Lys503 each participate in a glycyl lysine isopeptide (Lys-Gly) (interchain with G-Cter in ubiquitin) cross-link. The interval 532–592 (VAEPGSSQAG…PTQEPASKDS (61 aa)) is disordered. The segment covering 536–547 (GSSQAGSISNTG) has biased composition (polar residues). Ser553 carries the post-translational modification Phosphoserine; by GSK3-beta. A Phosphoserine; by DYRK1A and MAPK modification is found at Ser557. Polar residues predominate over residues 582–592 (MPTQEPASKDS).

It belongs to the DNA photolyase class-1 family. As to quaternary structure, component of the circadian core oscillator, which includes the CRY proteins, CLOCK or NPAS2, BMAL1 or BMAL2, CSNK1D and/or CSNK1E, TIMELESS, and the PER proteins. Interacts with TIMELESS. Interacts directly with PER1, PER2 and PER3; interaction with PER2 inhibits its ubiquitination and vice versa. Interacts with CLOCK-BMAL1. Interacts with BMAL1. Interacts with CLOCK. Interacts with NFIL3. Interacts with FBXL3 and FBXL21. FBXL3, PER2 and the cofactor FAD compete for overlapping binding sites. FBXL3 cannot bind CRY2 that interacts already with PER2 or that contains bound FAD. Interacts with PPP5C (via TPR repeats); the interaction down-regulates the PPP5C phosphatase activity on CSNK1E. Interacts with nuclear receptors AR and NR3C1/GR; the interaction is ligand dependent. Interacts with PRKDC. Interacts with CIART. Interacts with DDB1, USP7 and TARDBP. Interacts with HNF4A. Interacts with PPARA. Interacts with PPARG in a ligand-dependent manner. Interacts with PPARD (via domain NR LBD) in a ligand-dependent manner. Interacts with NR1I2 (via domain NR LBD) in a ligand-dependent manner. Interacts with NR1I3 and VDR in a ligand-dependent manner. Requires FAD as cofactor. The cofactor is (6R)-5,10-methylene-5,6,7,8-tetrahydrofolate. Phosphorylation on Ser-265 by MAPK is important for the inhibition of CLOCK-BMAL1-mediated transcriptional activity. Phosphorylation by CSKNE requires interaction with PER1 or PER2. Phosphorylated in a circadian manner at Ser-553 and Ser-557 in the suprachiasmatic nucleus (SCN) and liver. Phosphorylation at Ser-557 by DYRK1A promotes subsequent phosphorylation at Ser-553 by GSK3-beta: the two-step phosphorylation at the neighboring Ser residues leads to its proteasomal degradation. Post-translationally, ubiquitinated by the SCF(FBXL3) and SCF(FBXL21) complexes, regulating the balance between degradation and stabilization. The SCF(FBXL3) complex is mainly nuclear and mediates ubiquitination and subsequent degradation of CRY2. In contrast, cytoplasmic SCF(FBXL21) complex-mediated ubiquitination leads to stabilize CRY2 and counteract the activity of the SCF(FBXL3) complex. The SCF(FBXL3) and SCF(FBXL21) complexes probably mediate ubiquitination at different Lys residues. The SCF(FBXL3) complex recognizes and binds CRY2 phosphorylated at Ser-553 and Ser-557. Ubiquitination may be inhibited by PER2. Deubiquitinated by USP7. In terms of tissue distribution, expression in the retina is restricted to the photoreceptor layer (at protein level). Expressed in all tissues examined including heart, brain, spleen, lung, liver, skeletal muscle, kidney and testis. Weak expression in spleen.

The protein resides in the cytoplasm. It localises to the nucleus. KL001 (N-[3-(9H-carbazol-9-yl)-2-hydroxypropyl]-N-(2-furanylmethyl)-methanesulfonamide) binds to CRY1 and stabilizes it by inhibiting FBXL3- and ubiquitin-dependent degradation of CRY1 resulting in lengthening of the circadian periods. KL001-mediated CRY1 stabilization can inhibit glucagon-induced gluconeogenesis in primary hepatocytes. Its function is as follows. Transcriptional repressor which forms a core component of the circadian clock. The circadian clock, an internal time-keeping system, regulates various physiological processes through the generation of approximately 24 hour circadian rhythms in gene expression, which are translated into rhythms in metabolism and behavior. It is derived from the Latin roots 'circa' (about) and 'diem' (day) and acts as an important regulator of a wide array of physiological functions including metabolism, sleep, body temperature, blood pressure, endocrine, immune, cardiovascular, and renal function. Consists of two major components: the central clock, residing in the suprachiasmatic nucleus (SCN) of the brain, and the peripheral clocks that are present in nearly every tissue and organ system. Both the central and peripheral clocks can be reset by environmental cues, also known as Zeitgebers (German for 'timegivers'). The predominant Zeitgeber for the central clock is light, which is sensed by retina and signals directly to the SCN. The central clock entrains the peripheral clocks through neuronal and hormonal signals, body temperature and feeding-related cues, aligning all clocks with the external light/dark cycle. Circadian rhythms allow an organism to achieve temporal homeostasis with its environment at the molecular level by regulating gene expression to create a peak of protein expression once every 24 hours to control when a particular physiological process is most active with respect to the solar day. Transcription and translation of core clock components (CLOCK, NPAS2, BMAL1, BMAL2, PER1, PER2, PER3, CRY1 and CRY2) plays a critical role in rhythm generation, whereas delays imposed by post-translational modifications (PTMs) are important for determining the period (tau) of the rhythms (tau refers to the period of a rhythm and is the length, in time, of one complete cycle). A diurnal rhythm is synchronized with the day/night cycle, while the ultradian and infradian rhythms have a period shorter and longer than 24 hours, respectively. Disruptions in the circadian rhythms contribute to the pathology of cardiovascular diseases, cancer, metabolic syndromes and aging. A transcription/translation feedback loop (TTFL) forms the core of the molecular circadian clock mechanism. Transcription factors, CLOCK or NPAS2 and BMAL1 or BMAL2, form the positive limb of the feedback loop, act in the form of a heterodimer and activate the transcription of core clock genes and clock-controlled genes (involved in key metabolic processes), harboring E-box elements (5'-CACGTG-3') within their promoters. The core clock genes: PER1/2/3 and CRY1/2 which are transcriptional repressors form the negative limb of the feedback loop and interact with the CLOCK|NPAS2-BMAL1|BMAL2 heterodimer inhibiting its activity and thereby negatively regulating their own expression. This heterodimer also activates nuclear receptors NR1D1/2 and RORA/B/G, which form a second feedback loop and which activate and repress BMAL1 transcription, respectively. CRY1 and CRY2 have redundant functions but also differential and selective contributions at least in defining the pace of the SCN circadian clock and its circadian transcriptional outputs. Less potent transcriptional repressor in cerebellum and liver than CRY1, though less effective in lengthening the period of the SCN oscillator. Seems to play a critical role in tuning SCN circadian period by opposing the action of CRY1. With CRY1, dispensable for circadian rhythm generation but necessary for the development of intercellular networks for rhythm synchrony. May mediate circadian regulation of cAMP signaling and gluconeogenesis by blocking glucagon-mediated increases in intracellular cAMP concentrations and in CREB1 phosphorylation. Besides its role in the maintenance of the circadian clock, is also involved in the regulation of other processes. Plays a key role in glucose and lipid metabolism modulation, in part, through the transcriptional regulation of genes involved in these pathways, such as LEP or ACSL4. Represses glucocorticoid receptor NR3C1/GR-induced transcriptional activity by binding to glucocorticoid response elements (GREs). Represses the CLOCK-BMAL1 induced transcription of BHLHE40/DEC1 and NAMPT. Represses PPARD and its target genes in the skeletal muscle and limits exercise capacity. Represses the transcriptional activity of NR1I2. The protein is Cryptochrome-2 (Cry2) of Mus musculus (Mouse).